The primary structure comprises 452 residues: Fructose-2,6-bisphosphatase (452 aa).

The tract at residues 1–223 (MGYSTISNDN…VFYVMNIRPK (223 aa)) is 6-phosphofructo-2-kinase. ATP is bound at residue 20–28 (GLPARGKSF). Positions 53 and 78 each coordinate beta-D-fructose 6-phosphate. The active site involves aspartate 104. The beta-D-fructose 6-phosphate site is built by threonine 106 and arginine 112. Residue 143–148 (NAKDIG) participates in ATP binding. Positions 169 and 173 each coordinate beta-D-fructose 6-phosphate. The fructose-2,6-bisphosphatase stretch occupies residues 224–452 (PKYIWLSRHG…LNDSPLEDKF (229 aa)). Arginine 231 contributes to the beta-D-fructose 2,6-bisphosphate binding site. The active-site Tele-phosphohistidine intermediate is the histidine 232. The beta-D-fructose 2,6-bisphosphate site is built by asparagine 238 and glycine 244. The Proton donor/acceptor role is filled by glutamate 302. The beta-D-fructose 2,6-bisphosphate site is built by tyrosine 313, arginine 327, lysine 331, tyrosine 342, glutamine 368, and arginine 372. Residue 324 to 327 (FKAR) coordinates ATP. Residues 368 to 372 (QAVLR) and tyrosine 404 contribute to the ATP site. 2 positions are modified to phosphoserine: serine 435 and serine 446.

It in the C-terminal section; belongs to the phosphoglycerate mutase family.

The catalysed reaction is beta-D-fructose 2,6-bisphosphate + H2O = beta-D-fructose 6-phosphate + phosphate. Inhibited by fructose 6-P, activated by glycerol 3-P. Its function is as follows. Monofunctional, high-specificity fructose-2,6-bisphosphatase, which releases phosphate from the 2-position of fructose 2,6-bisphosphate. Has no detectable 6-phosphofructo-2-kinase activity. The polypeptide is Fructose-2,6-bisphosphatase (Saccharomyces cerevisiae (strain ATCC 204508 / S288c) (Baker's yeast)).